The sequence spans 334 residues: Endoplasmic reticulum junction formation protein lunapark (334 aa).

Over 1–40 (MGWFFQKKKEFDFGGELDRLEMKLEEAQYNIDNIQSQKKK) the chain is Cytoplasmic. The stretch at 12–42 (DFGGELDRLEMKLEEAQYNIDNIQSQKKKIL) forms a coiled coil. A helical transmembrane segment spans residues 41–61 (ILFRYTVCSLAIYTIGMAVWA). The Lumenal segment spans residues 62–78 (SRSSILFQHPLFSKLFR). A helical membrane pass occupies residues 79 to 99 (ISLYILGVFSLYMFRWAIAWF). Residues 99-127 (FCEKRLSRARMNLHKLNAEKRKILDALKS) are a coiled coil. Topologically, residues 100 to 334 (CEKRLSRARM…SVPESLTPTK (235 aa)) are cytoplasmic. Residues 201 to 227 (CSHCFHHNGLASYGEKASDVRYVCLFC) form a C4-type; plays a role in ER morphology zinc finger. Residues 237-315 (KSLPSSEMDS…SSPDASYNSV (79 aa)) form a disordered region. Polar residues predominate over residues 239 to 252 (LPSSEMDSNLQTNP). A compositionally biased stretch (low complexity) spans 253-270 (SSISKGKKNNSNNTTQKG). A compositionally biased stretch (polar residues) spans 273–283 (IISSPQVINAS). Residue serine 284 is modified to Phosphoserine. Residues 297–315 (ALPTSPLSSSSPDASYNSV) are compositionally biased toward low complexity.

This sequence belongs to the lunapark family.

The protein localises to the endoplasmic reticulum membrane. It is found in the golgi apparatus membrane. In terms of biological role, plays a role in tubular endoplasmic reticulum network formation and maintenance. The protein is Endoplasmic reticulum junction formation protein lunapark (lnp1) of Schizosaccharomyces pombe (strain 972 / ATCC 24843) (Fission yeast).